Reading from the N-terminus, the 628-residue chain is 3-hydroxy-3-methylglutaryl-coenzyme A reductase 2 (628 aa).

2 helical membrane passes run Pro38–Leu58 and Glu78–Ile98. The tract at residues Asp99–Glu212 is linker. Asn153 carries N-linked (GlcNAc...) asparagine glycosylation. The interval Glu213 to Ser628 is catalytic. Glu307 acts as the Charge relay system in catalysis. Asn371 is a glycosylation site (N-linked (GlcNAc...) asparagine). Lys439 acts as the Charge relay system in catalysis. N-linked (GlcNAc...) asparagine glycosylation occurs at Asn484. The Charge relay system role is filled by Asp515. His613 acts as the Proton donor in catalysis. N-linked (GlcNAc...) asparagine glycosylation is found at Asn617 and Asn625.

It belongs to the HMG-CoA reductase family.

It is found in the endoplasmic reticulum membrane. The protein resides in the mitochondrion membrane. It localises to the plastid membrane. The catalysed reaction is (R)-mevalonate + 2 NADP(+) + CoA = (3S)-3-hydroxy-3-methylglutaryl-CoA + 2 NADPH + 2 H(+). It functions in the pathway metabolic intermediate biosynthesis; (R)-mevalonate biosynthesis; (R)-mevalonate from acetyl-CoA: step 3/3. Catalyzes the synthesis of mevalonate. The specific precursor of all isoprenoid compounds present in plants. The sequence is that of 3-hydroxy-3-methylglutaryl-coenzyme A reductase 2 (HMG2) from Gossypium hirsutum (Upland cotton).